Here is an 81-residue protein sequence, read N- to C-terminus: Small ribosomal subunit protein bS16 (81 aa).

Belongs to the bacterial ribosomal protein bS16 family.

This is Small ribosomal subunit protein bS16 from Lachnospira eligens (strain ATCC 27750 / DSM 3376 / VPI C15-48 / C15-B4) (Eubacterium eligens).